Reading from the N-terminus, the 363-residue chain is MGFKCGIVGLPNVGKSTLFNALTKAGIEAANFPFCTIEPNTGVVPMPDPRLDQLAEIVKPQRTLPTTMEFVDIAGLVKGASKGEGLGNQFLTNIRETEAIGHVVRCFENDNIIHVSGKVNPADDIEVINTELALADLDTCERAIHRVQKKAKGGDKDAKAELAVLEKCLPQLENAGMLRALDLSAEEKAAIRYLSFLTLKPTMYIANVNEDGFENNPYLDQVREIAAKEGSVVVPVCAAVEADIAELDDEERDEFMQELGLEEPGLNRVIRAGYKLLNLQTYFTAGVKEVRAWTIPVGATAPQAAGKIHTDFEKGFIRAQTISFEDFITYKGEQGAKEAGKMRAEGKDYIVKDGDVMNFLFNV.

The 254-residue stretch at Phe-3 to Met-256 folds into the OBG-type G domain. Position 12 to 17 (Asn-12 to Thr-17) interacts with ATP. Ser-16 and Thr-36 together coordinate Mg(2+). The 84-residue stretch at Asn-278 to Phe-361 folds into the TGS domain.

The protein belongs to the TRAFAC class OBG-HflX-like GTPase superfamily. OBG GTPase family. YchF/OLA1 subfamily. The cofactor is Mg(2+).

In terms of biological role, ATPase that binds to both the 70S ribosome and the 50S ribosomal subunit in a nucleotide-independent manner. In Escherichia coli O157:H7, this protein is Ribosome-binding ATPase YchF.